The sequence spans 202 residues: Matrix protein (202 aa).

The PPXY motif signature appears at 35 to 38 (PPEY). The segment at 115–151 (KLRRTLIFQWADSRGPLEGEELEYSQEITWDDDTEFV) is essential for glycoprotein binding.

This sequence belongs to the lyssavirus matrix protein family. As to quaternary structure, homomultimer. Interacts with nucleoprotein and with the cytoplasmic domain of glycoprotein. Interacts with host ATP6V1A; this interaction plays an important role in virion uncoating after viral entry.

The protein localises to the virion membrane. It localises to the host endomembrane system. Its subcellular location is the host cytoplasm. Its function is as follows. Plays a major role in assembly, budding and uncoating of virion after membrane fusion. Completely covers the ribonucleoprotein coil and keep it in condensed bullet-shaped form. Inhibits viral transcription and stimulates replication. Plays a major role in early induction of TRAIL-mediated apoptosis in infected neurons. Inhibits the integrated stress response (ISR) in the infected cell by blocking the formation of stress granules. The chain is Matrix protein (M) from Homo sapiens (Human).